The following is a 325-amino-acid chain: Fructose-1,6-bisphosphatase class 1 (325 aa).

Glutamate 84, aspartate 103, leucine 105, and aspartate 106 together coordinate Mg(2+). Residues 106–109 (DGSS), asparagine 196, and lysine 262 contribute to the substrate site. Glutamate 268 is a Mg(2+) binding site.

This sequence belongs to the FBPase class 1 family. In terms of assembly, homotetramer. Mg(2+) serves as cofactor.

It is found in the cytoplasm. The catalysed reaction is beta-D-fructose 1,6-bisphosphate + H2O = beta-D-fructose 6-phosphate + phosphate. It participates in carbohydrate biosynthesis; gluconeogenesis. This chain is Fructose-1,6-bisphosphatase class 1, found in Shewanella baltica (strain OS195).